The primary structure comprises 340 residues: Short-chain dehydrogenase/reductase prx1 (340 aa).

The NADP(+) site is built by isoleucine 60, lysine 84, aspartate 104, asparagine 131, and lysine 162. Catalysis depends on serine 184, which acts as the Proton donor. Positions 210 and 214 each coordinate NADP(+). Catalysis depends on tyrosine 210, which acts as the Proton acceptor. The active-site Lowers pKa of active site Tyr is the lysine 214.

This sequence belongs to the short-chain dehydrogenases/reductases (SDR) family.

Its pathway is sesquiterpene biosynthesis. In terms of biological role, short-chain dehydrogenase/reductase; part of the gene cluster that mediates the biosynthesis of PR-toxin, a bicyclic sesquiterpene belonging to the eremophilane class and acting as a mycotoxin. The first step of the pathway is catalyzed by the aristolochene synthase which performs the cyclization of trans,trans-farnesyl diphosphate (FPP) to the bicyclic sesquiterpene aristolochene. Following the formation of aristolochene, the non-oxygenated aristolochene is converted to the trioxygenated intermediate eremofortin B, via 7-epi-neopetasone. This conversion appears to involve three enzymes, a hydroxysterol oxidase-like enzyme, the quinone-oxidase prx3 that forms the quinone-type-structure in the bicyclic nucleus of aristolochene with the C8-oxo group and the C-3 hydroxyl group, and the P450 monooxygenase prx9 that introduces the epoxide at the double bond between carbons 1 and 2. No monoxy or dioxy-intermediates have been reported to be released to the broth, so these three early oxidative reactions may be coupled together. Eremofortin B is further oxidized by another P450 monooxygenase, that introduces a second epoxide between carbons 7 and 11 prior to acetylation to eremofortin A by the acetyltransferase prx11. The second epoxidation may be performed by a second P450 monooxygenase. After the acetylation step, eremofortin A is converted to eremofortin C and then to PR-toxin. First the conversion of eremofortin A to eremofortin C proceeds by oxidation of the side chain of the molecule at C-12 and is catalyzed by the short-chain oxidoreductase prx1. The cytochrome P450 monooxygenase prx8 also plays a role in this step. The primary alcohol formed at C-12 is finally oxidized by the short-chain alcohol dehydrogenase prx4 that forms PR-toxin. This is Short-chain dehydrogenase/reductase prx1 from Penicillium rubens (strain ATCC 28089 / DSM 1075 / NRRL 1951 / Wisconsin 54-1255) (Penicillium chrysogenum).